The following is a 442-amino-acid chain: ATP-dependent protease ATPase subunit HslU (442 aa).

ATP contacts are provided by residues I18 and 60 to 65 (GVGKTE). The tract at residues 137–156 (PKPKNDWESTETDSSSNTRQ) is disordered. Positions 255, 320, and 392 each coordinate ATP.

It belongs to the ClpX chaperone family. HslU subfamily. In terms of assembly, a double ring-shaped homohexamer of HslV is capped on each side by a ring-shaped HslU homohexamer. The assembly of the HslU/HslV complex is dependent on binding of ATP.

It localises to the cytoplasm. Functionally, ATPase subunit of a proteasome-like degradation complex; this subunit has chaperone activity. The binding of ATP and its subsequent hydrolysis by HslU are essential for unfolding of protein substrates subsequently hydrolyzed by HslV. HslU recognizes the N-terminal part of its protein substrates and unfolds these before they are guided to HslV for hydrolysis. In Shewanella baltica (strain OS155 / ATCC BAA-1091), this protein is ATP-dependent protease ATPase subunit HslU.